A 473-amino-acid chain; its full sequence is MAELSIASGIVGLLSLGIQVTQSLISFYSAYKDQDGDLAKITQNFEDLQGIFQSLESAVQDRQSQGDMDEVLKEVDKAMQGCHEIIEELQKECQKLHTDLGLSLKGHIQVAGRRAAYPFRKSTLQKLKEDTARNQNQLDLFLHSLPKDLDETYERILCSIDENYVDDVCRILTLLCFSARPLTINELIDAHAVDLSASPHLDREGRSYEQNDLIDICLGLIEISKTEDSGQQLLIARIAHFSVQEYLQSERIQQQKANRFAIQSGPANTEITQICLVYLLEPMLSSGVLDTIKIKEFPLAHFAAEYWYHHYVNSREGRLKVEELLQRLFQYDTNCFVTWIRIYGLDRQGTLRPNSDYQRPIDDIGSPFYYASLLGLESTLSNMIAAGARDASFLEMVNAQSGEYGNALQAASSGGHWKVVQMLLDQGADVNAQSGRYGNALHAASSRGHKKVVQMLLDHGANVSTQGRELTLW.

An N-terminal signal peptide occupies residues 1–23 (MAELSIASGIVGLLSLGIQVTQS). ANK repeat units follow at residues 403 to 432 (EYGN…DVNA) and 436 to 465 (RYGN…NVST). A glycan (N-linked (GlcNAc...) asparagine) is linked at Asn462.

Functionally, part of the gene cluster that mediates the biosynthesis of azaphilone pigments (MonAzPs), a complex mixture of compounds with a common azaphilone skeleton very widely used as food colorants. Seems not to play a direct role in the biosynthesis but might have a regulatorx function. The protein is Azaphilone pigments biosynthesis cluster protein L of Monascus ruber (Mold).